Here is a 228-residue protein sequence, read N- to C-terminus: MYLVDTIDYQKICCIIKTFEDNILFQKNYHSTWFLKSIANIQKEKYNYGLEVAFVGYSNSGKSSIINALTNQKKLAKISRTPGRTRLINIFSVTSEIRLVDFPGYGYAQVSRSISKKWKEMIFQYLNIQKCLQGLVIITDIRCPIKEIDELVINLAVSLNIPILLLLNKMDKVTRSIQKSKLFSTREKMLNFSNNINVELFSSFKKIGIHKLQFVLNNWFSSDKKLCQ.

Residues 48–222 (YGLEVAFVGY…QFVLNNWFSS (175 aa)) enclose the EngB-type G domain. Residues 56 to 63 (GYSNSGKS), 83 to 87 (GRTRL), 101 to 104 (DFPG), 168 to 171 (NKMD), and 201 to 203 (FSS) each bind GTP. 2 residues coordinate Mg(2+): S63 and T85.

Belongs to the TRAFAC class TrmE-Era-EngA-EngB-Septin-like GTPase superfamily. EngB GTPase family. Requires Mg(2+) as cofactor.

In terms of biological role, necessary for normal cell division and for the maintenance of normal septation. This chain is Probable GTP-binding protein EngB, found in Buchnera aphidicola subsp. Baizongia pistaciae (strain Bp).